Here is a 218-residue protein sequence, read N- to C-terminus: Small ribosomal subunit protein uS3c (218 aa).

A KH type-2 domain is found at 43–118 (IKNYVQKNTK…KFNIAITKIA (76 aa)).

This sequence belongs to the universal ribosomal protein uS3 family. As to quaternary structure, part of the 30S ribosomal subunit.

It localises to the plastid. The protein localises to the chloroplast. In Coffea arabica (Arabian coffee), this protein is Small ribosomal subunit protein uS3c (rps3).